The chain runs to 226 residues: EEF1A lysine methyltransferase 3 (226 aa).

S-adenosyl-L-methionine is bound by residues W57, 83 to 85 (GAG), D104, W133, and A150.

It belongs to the methyltransferase superfamily. METTL21 family. As to quaternary structure, interacts with members of the heat shock protein 70 and 90 families and of the TCP-1 chaperonin family, as well as with HSPD1, STIP1 and tubulin; at least some of these proteins may be methylation substrates.

The protein resides in the cytoplasm. Its subcellular location is the cytoskeleton. The protein localises to the microtubule organizing center. It localises to the centrosome. It catalyses the reaction L-lysyl-[protein] + 3 S-adenosyl-L-methionine = N(6),N(6),N(6)-trimethyl-L-lysyl-[protein] + 3 S-adenosyl-L-homocysteine + 3 H(+). The enzyme catalyses L-lysyl-[protein] + S-adenosyl-L-methionine = N(6)-methyl-L-lysyl-[protein] + S-adenosyl-L-homocysteine + H(+). The catalysed reaction is N(6)-methyl-L-lysyl-[protein] + S-adenosyl-L-methionine = N(6),N(6)-dimethyl-L-lysyl-[protein] + S-adenosyl-L-homocysteine + H(+). It carries out the reaction N(6),N(6)-dimethyl-L-lysyl-[protein] + S-adenosyl-L-methionine = N(6),N(6),N(6)-trimethyl-L-lysyl-[protein] + S-adenosyl-L-homocysteine + H(+). Protein-lysine methyltransferase that selectively mono-, di- and trimethylates 'Lys-165' of the translation elongation factors EEF1A1 and EEF1A2 in an aminoacyl-tRNA and GTP-dependent manner. EEF1A1 methylation by EEF1AKMT3 is dynamic as well as inducible by stress conditions, such as ER-stress, and plays a regulatory role on mRNA translation. The polypeptide is EEF1A lysine methyltransferase 3 (Homo sapiens (Human)).